Reading from the N-terminus, the 377-residue chain is Guanine nucleotide exchange factor for Rab-3A (377 aa).

Residues 23–57 (WKNLGPSKGNRKSPGGLVEASASWEEAGGEEHPAA) are disordered. A coiled-coil region spans residues 77-128 (SEFLKEELYKAQKELKLKDEECERLCKVRAQLEQELEELTASLFEEAHKMVR). Residues 167 to 198 (PASPNRELHPQLLSPTKAGPRKGHSRQKSTSS) are disordered. Phosphoserine occurs at positions 169 and 180.

The protein belongs to the SEC2 family. In terms of assembly, interacts with RAB3A and IHPK1 through the coiled-coil domain. This interaction is competitive. IHPK1 kinase activity is not required for this interaction. Selectively localized to the brain (at protein level).

Guanine nucleotide exchange factor (GEF) which may activate RAB3A, a GTPase that regulates synaptic vesicle exocytosis. Promotes the exchange of GDP to GTP, converting inactive GDP-bound Rab proteins into their active GTP-bound form. May also activate RAB8A and RAB8B. The chain is Guanine nucleotide exchange factor for Rab-3A (Rab3il1) from Rattus norvegicus (Rat).